The following is a 1400-amino-acid chain: DNA-directed RNA polymerase subunit beta' (1400 aa).

Residues Cys-71, Cys-73, Cys-86, and Cys-89 each contribute to the Zn(2+) site. Asp-462, Asp-464, and Asp-466 together coordinate Mg(2+). Positions 811, 885, 892, and 895 each coordinate Zn(2+).

The protein belongs to the RNA polymerase beta' chain family. In terms of assembly, the RNAP catalytic core consists of 2 alpha, 1 beta, 1 beta' and 1 omega subunit. When a sigma factor is associated with the core the holoenzyme is formed, which can initiate transcription. Requires Mg(2+) as cofactor. Zn(2+) serves as cofactor.

The enzyme catalyses RNA(n) + a ribonucleoside 5'-triphosphate = RNA(n+1) + diphosphate. Its function is as follows. DNA-dependent RNA polymerase catalyzes the transcription of DNA into RNA using the four ribonucleoside triphosphates as substrates. The polypeptide is DNA-directed RNA polymerase subunit beta' (Brucella canis (strain ATCC 23365 / NCTC 10854 / RM-666)).